We begin with the raw amino-acid sequence, 481 residues long: Proline--tRNA ligase (481 aa).

The protein belongs to the class-II aminoacyl-tRNA synthetase family. ProS type 3 subfamily. Homodimer.

It localises to the cytoplasm. It carries out the reaction tRNA(Pro) + L-proline + ATP = L-prolyl-tRNA(Pro) + AMP + diphosphate. Catalyzes the attachment of proline to tRNA(Pro) in a two-step reaction: proline is first activated by ATP to form Pro-AMP and then transferred to the acceptor end of tRNA(Pro). The protein is Proline--tRNA ligase of Thermococcus kodakarensis (strain ATCC BAA-918 / JCM 12380 / KOD1) (Pyrococcus kodakaraensis (strain KOD1)).